Here is a 150-residue protein sequence, read N- to C-terminus: D-aminoacyl-tRNA deacylase (150 aa).

The Gly-cisPro motif, important for rejection of L-amino acids motif lies at 136–137 (GP).

The protein belongs to the DTD family. As to quaternary structure, homodimer.

It localises to the cytoplasm. The catalysed reaction is glycyl-tRNA(Ala) + H2O = tRNA(Ala) + glycine + H(+). The enzyme catalyses a D-aminoacyl-tRNA + H2O = a tRNA + a D-alpha-amino acid + H(+). Functionally, an aminoacyl-tRNA editing enzyme that deacylates mischarged D-aminoacyl-tRNAs. Also deacylates mischarged glycyl-tRNA(Ala), protecting cells against glycine mischarging by AlaRS. Acts via tRNA-based rather than protein-based catalysis; rejects L-amino acids rather than detecting D-amino acids in the active site. By recycling D-aminoacyl-tRNA to D-amino acids and free tRNA molecules, this enzyme counteracts the toxicity associated with the formation of D-aminoacyl-tRNA entities in vivo and helps enforce protein L-homochirality. The chain is D-aminoacyl-tRNA deacylase from Macrococcus caseolyticus (strain JCSC5402) (Macrococcoides caseolyticum).